The following is a 158-amino-acid chain: NAD(P)H-quinone oxidoreductase subunit J, chloroplastic (158 aa).

It belongs to the complex I 30 kDa subunit family. As to quaternary structure, NDH is composed of at least 16 different subunits, 5 of which are encoded in the nucleus.

The protein resides in the plastid. The protein localises to the chloroplast thylakoid membrane. The catalysed reaction is a plastoquinone + NADH + (n+1) H(+)(in) = a plastoquinol + NAD(+) + n H(+)(out). It carries out the reaction a plastoquinone + NADPH + (n+1) H(+)(in) = a plastoquinol + NADP(+) + n H(+)(out). Its function is as follows. NDH shuttles electrons from NAD(P)H:plastoquinone, via FMN and iron-sulfur (Fe-S) centers, to quinones in the photosynthetic chain and possibly in a chloroplast respiratory chain. The immediate electron acceptor for the enzyme in this species is believed to be plastoquinone. Couples the redox reaction to proton translocation, and thus conserves the redox energy in a proton gradient. This chain is NAD(P)H-quinone oxidoreductase subunit J, chloroplastic, found in Jasminum nudiflorum (Winter jasmine).